A 337-amino-acid polypeptide reads, in one-letter code: Casein kinase I isoform alpha (337 aa).

A2 is modified (N-acetylalanine). S4 is modified (phosphoserine). Position 8 is an N6-acetyllysine (K8). Residues 17–285 (YKLVRKIGSG…YLRQLFRILF (269 aa)) enclose the Protein kinase domain. ATP contacts are provided by residues 23–31 (IGSGSFGDI) and K46. D136 acts as the Proton acceptor in catalysis. Positions 309-325 (AASSSGQGQQAQTPTGK) are enriched in low complexity. Positions 309-337 (AASSSGQGQQAQTPTGKQTDKTKSNMKGF) are disordered.

Belongs to the protein kinase superfamily. CK1 Ser/Thr protein kinase family. Casein kinase I subfamily. Interacts with the Axin complex. Interacts with TUT1, leading to TUT1 phosphorylation. Interacts with FAM83A, FAM83B, FAM83C, FAM83D, FAM83E, FAM83F, FAM83G and FAM83H (via DUF1669). Interaction with FAM83H recruits CSNK1A1 to keratin filaments. In terms of processing, phosphorylated by MTOR in response to mitogenic stimulation, leading to its activation.

The protein resides in the cytoplasm. It is found in the cytoskeleton. It localises to the microtubule organizing center. Its subcellular location is the centrosome. The protein localises to the chromosome. The protein resides in the centromere. It is found in the kinetochore. It localises to the nucleus speckle. Its subcellular location is the cilium basal body. The protein localises to the spindle. The enzyme catalyses L-seryl-[protein] + ATP = O-phospho-L-seryl-[protein] + ADP + H(+). The catalysed reaction is L-threonyl-[protein] + ATP = O-phospho-L-threonyl-[protein] + ADP + H(+). In terms of biological role, casein kinases are operationally defined by their preferential utilization of acidic proteins such as caseins as substrates. Can phosphorylate a large number of proteins. Participates in Wnt signaling. Phosphorylates CTNNB1 at 'Ser-45'. May phosphorylate PER1 and PER2. May play a role in segregating chromosomes during mitosis. May play a role in keratin cytoskeleton disassembly and thereby, it may regulate epithelial cell migration. Acts as a positive regulator of mTORC1 and mTORC2 signaling in response to nutrients by mediating phosphorylation of DEPTOR inhibitor. Acts as an inhibitor of NLRP3 inflammasome assembly by mediating phosphorylation of NLRP3. The polypeptide is Casein kinase I isoform alpha (Csnk1a1) (Mus musculus (Mouse)).